A 424-amino-acid polypeptide reads, in one-letter code: O-seryl-dTMP PLP-dependent decarboxylase (424 aa).

It belongs to the pyridoxal-phosphate-dependent aminodecarboxylase family.

The enzyme catalyses 5-O-(L-seryl)-dTMP in DNA + H(+) = 5-aminoethoxy-methyl-dUMP in DNA + CO2. Its function is as follows. Converts 5-O-serinylthymidine (O-SerT) into 5-aminoethoxy-2'-deoxymethyluridine (5-NeOmdU) as a step in the pathway leading to thymidine hypermodifications in the viral genome. As a final result of the pathway of hypermodification, 5-NeOmdU substitutes for about 40% of the thymidines in the viral DNA. These modifications probably prevent degradation of viral genome by the host restriction-modification antiviral defense system. This chain is O-seryl-dTMP PLP-dependent decarboxylase, found in Salmonella phage ViI.